The chain runs to 452 residues: Na(+)/H(+) antiporter NhaA (452 aa).

Helical transmembrane passes span 23–43 (MMLF…LSTI), 71–91 (LLQF…GLEI), 108–128 (LPIV…LLVV), 136–156 (GAAI…AVLG), 165–185 (VFLT…IALF), 189–209 (HINI…YLMG), 216–236 (LGLY…SGIH), 316–336 (IVGY…TLGG), 349–369 (VFLG…YGFV), 385–405 (LMAV…IATL), and 418–438 (EAKL…IVTL).

It belongs to the NhaA Na(+)/H(+) (TC 2.A.33) antiporter family.

The protein localises to the cell inner membrane. It catalyses the reaction Na(+)(in) + 2 H(+)(out) = Na(+)(out) + 2 H(+)(in). Na(+)/H(+) antiporter that extrudes sodium in exchange for external protons. The chain is Na(+)/H(+) antiporter NhaA from Porphyromonas gingivalis (strain ATCC 33277 / DSM 20709 / CIP 103683 / JCM 12257 / NCTC 11834 / 2561).